A 797-amino-acid chain; its full sequence is Protocadherin beta-9 (797 aa).

A signal peptide spans 1–26 (MKTRGFSFPRQRQVLFLFLFWGVSLA). At 27–690 (GSGFGRYSVT…AQADSLTVYL (664 aa)) the chain is on the extracellular side. Cadherin domains follow at residues 35 to 133 (VTEE…SPVF), 138 to 242 (MVLK…APQF), 247 to 347 (YETQ…PPEL), 352 to 451 (LSNS…APAF), and 456 to 561 (YTLF…SPFV). A glycan (N-linked (GlcNAc...) asparagine) is linked at Asn169. N-linked (GlcNAc...) asparagine glycosylation occurs at Asn418. The N-linked (GlcNAc...) asparagine glycan is linked to Asn567. One can recognise a Cadherin 6 domain in the interval 568-671 (GSAPCTELVP…LVDGFSQPYL (104 aa)). The helical transmembrane segment at 691–711 (VVALASVSSLFLLSVLLFVAV) threads the bilayer. Over 712–797 (RLCRRSRAAS…TLHNSFGFNY (86 aa)) the chain is Cytoplasmic.

Its subcellular location is the cell membrane. Its function is as follows. Potential calcium-dependent cell-adhesion protein. May be involved in the establishment and maintenance of specific neuronal connections in the brain. This Pan troglodytes (Chimpanzee) protein is Protocadherin beta-9 (PCDHB9).